Consider the following 228-residue polypeptide: MFDFGLGELVFVGIIALIVLGPERLPEAARTAGRLIGRLQRFVGSVKQEFDTQIELEELRKAKQEFEAAAAQVRDSLKETGTDMQNSLHDISDGLKPWEKLPEQRTPADFGVDENGNPFPDAANTLSDGISDVMPSERSDTSAEILGDSGQTGSTAEPAETDQDRAWREYLTASAAAPVVQTVEVSYIDTAVETPVPHTTSLRKQAISRKRGLRPKHRAKPKLRVRKS.

The chain crosses the membrane as a helical span at residues 1 to 21 (MFDFGLGELVFVGIIALIVLG). 2 disordered regions span residues 126 to 162 (LSDGISDVMPSERSDTSAEILGDSGQTGSTAEPAETD) and 196 to 228 (VPHTTSLRKQAISRKRGLRPKHRAKPKLRVRKS). Residues 206-228 (AISRKRGLRPKHRAKPKLRVRKS) show a composition bias toward basic residues.

It belongs to the TatB family. In terms of assembly, the Tat system comprises two distinct complexes: a TatABC complex, containing multiple copies of TatA, TatB and TatC subunits, and a separate TatA complex, containing only TatA subunits. Substrates initially bind to the TatABC complex, which probably triggers association of the separate TatA complex to form the active translocon.

It is found in the cell inner membrane. In terms of biological role, part of the twin-arginine translocation (Tat) system that transports large folded proteins containing a characteristic twin-arginine motif in their signal peptide across membranes. Together with TatC, TatB is part of a receptor directly interacting with Tat signal peptides. TatB may form an oligomeric binding site that transiently accommodates folded Tat precursor proteins before their translocation. The sequence is that of Sec-independent protein translocase protein TatB from Neisseria meningitidis serogroup C / serotype 2a (strain ATCC 700532 / DSM 15464 / FAM18).